The following is a 92-amino-acid chain: Small ribosomal subunit protein uS19 (92 aa).

It belongs to the universal ribosomal protein uS19 family.

In terms of biological role, protein S19 forms a complex with S13 that binds strongly to the 16S ribosomal RNA. In Dinoroseobacter shibae (strain DSM 16493 / NCIMB 14021 / DFL 12), this protein is Small ribosomal subunit protein uS19.